Consider the following 446-residue polypeptide: tRNA modification GTPase MnmE (446 aa).

Arg24, Glu81, and Lys120 together coordinate (6S)-5-formyl-5,6,7,8-tetrahydrofolate. The region spanning 216-368 (GLHAVLIGPP…LHIRLRALAL (153 aa)) is the TrmE-type G domain. K(+) is bound at residue Asn226. Residues 226-231 (NAGKSS), 245-251 (TDVAGTT), and 270-273 (DTAG) contribute to the GTP site. Position 230 (Ser230) interacts with Mg(2+). The K(+) site is built by Thr245, Val247, and Thr250. A Mg(2+)-binding site is contributed by Thr251. A (6S)-5-formyl-5,6,7,8-tetrahydrofolate-binding site is contributed by Lys446.

This sequence belongs to the TRAFAC class TrmE-Era-EngA-EngB-Septin-like GTPase superfamily. TrmE GTPase family. As to quaternary structure, homodimer. Heterotetramer of two MnmE and two MnmG subunits. K(+) is required as a cofactor.

The protein localises to the cytoplasm. Its function is as follows. Exhibits a very high intrinsic GTPase hydrolysis rate. Involved in the addition of a carboxymethylaminomethyl (cmnm) group at the wobble position (U34) of certain tRNAs, forming tRNA-cmnm(5)s(2)U34. This Xanthomonas euvesicatoria pv. vesicatoria (strain 85-10) (Xanthomonas campestris pv. vesicatoria) protein is tRNA modification GTPase MnmE.